The primary structure comprises 355 residues: Guanine nucleotide-binding protein G(i) subunit alpha-2 (355 aa).

Glycine 2 carries N-myristoyl glycine lipidation. A lipid anchor (S-palmitoyl cysteine) is attached at cysteine 3. The G-alpha domain occupies 32-355; sequence REVKLLLLGA…KNNLKDCGLF (324 aa). Residues 35–48 are G1 motif; it reads KLLLLGAGESGKST. Residues 40-47, 176-182, 201-205, 270-273, and alanine 327 contribute to the GTP site; these read GAGESGKS, LRTRVKT, DVGGQ, and NKKD. Serine 47 and threonine 182 together coordinate Mg(2+). The G2 motif stretch occupies residues 174–182; it reads DVLRTRVKT. Positions 197 to 206 are G3 motif; sequence FKMFDVGGQR. The segment at 266-273 is G4 motif; sequence ILFLNKKD. The interval 325 to 330 is G5 motif; sequence TCATDT.

It belongs to the G-alpha family. G(i/o/t/z) subfamily. G proteins are composed of 3 units; alpha, beta and gamma. The alpha chain contains the guanine nucleotide binding site. In this context, interacts with GNB2. Interacts with UNC5B. Interacts with GPSM1. Interacts with RGS12 and RGS14. Interacts (inactive GDP-bound form) with NUCB1 (via GBA motif); the interaction leads to activation of GNAI3. Interacts (inactive GDP-bound form) with CCDC88C/DAPLE (via GBA motif). Interacts (inactive GDP-bound form) with CCDC8A/GIV (via GBA motif). As to expression, ubiquitously expressed. Most abundant in the lung and in the spleen.

The protein localises to the cytoplasm. It localises to the cytoskeleton. It is found in the microtubule organizing center. Its subcellular location is the centrosome. The protein resides in the cell membrane. The protein localises to the membrane. Functionally, guanine nucleotide-binding proteins (G proteins) are involved as modulators or transducers in various transmembrane signaling systems. The G(i) proteins are involved in hormonal regulation of adenylate cyclase: they inhibit the cyclase in response to beta-adrenergic stimuli. May play a role in cell division. This chain is Guanine nucleotide-binding protein G(i) subunit alpha-2 (GNAI2), found in Cavia porcellus (Guinea pig).